We begin with the raw amino-acid sequence, 128 residues long: Fluoride-specific ion channel FluC (128 aa).

4 consecutive transmembrane segments (helical) span residues 3–23 (FSVIFAVGIGGFFGAISRFLI), 34–54 (LFPVGTLTVNVLGSFIIGFLY), 69–89 (FITGFLGALTTFSTFSLETLL), and 100–120 (FLNILLNVILTISSTFAAIIL). Na(+)-binding residues include Gly75 and Thr78.

It belongs to the fluoride channel Fluc/FEX (TC 1.A.43) family.

The protein localises to the cell inner membrane. It carries out the reaction fluoride(in) = fluoride(out). Na(+) is not transported, but it plays an essential structural role and its presence is essential for fluoride channel function. Fluoride-specific ion channel. Important for reducing fluoride concentration in the cell, thus reducing its toxicity. This is Fluoride-specific ion channel FluC from Nitratiruptor sp. (strain SB155-2).